We begin with the raw amino-acid sequence, 246 residues long: 1-(5-phosphoribosyl)-5-[(5-phosphoribosylamino)methylideneamino] imidazole-4-carboxamide isomerase (246 aa).

Asp-8 serves as the catalytic Proton acceptor. Residue Asp-131 is the Proton donor of the active site.

This sequence belongs to the HisA/HisF family.

Its subcellular location is the cytoplasm. The enzyme catalyses 1-(5-phospho-beta-D-ribosyl)-5-[(5-phospho-beta-D-ribosylamino)methylideneamino]imidazole-4-carboxamide = 5-[(5-phospho-1-deoxy-D-ribulos-1-ylimino)methylamino]-1-(5-phospho-beta-D-ribosyl)imidazole-4-carboxamide. The protein operates within amino-acid biosynthesis; L-histidine biosynthesis; L-histidine from 5-phospho-alpha-D-ribose 1-diphosphate: step 4/9. The chain is 1-(5-phosphoribosyl)-5-[(5-phosphoribosylamino)methylideneamino] imidazole-4-carboxamide isomerase from Delftia acidovorans (strain DSM 14801 / SPH-1).